A 350-amino-acid chain; its full sequence is tRNA N6-adenosine threonylcarbamoyltransferase (350 aa).

The Fe cation site is built by His-109 and His-113. Substrate contacts are provided by residues 136-140 (TVSGG), Asp-169, Gly-182, Asp-186, and Asn-284. Asp-312 lines the Fe cation pocket.

The protein belongs to the KAE1 / TsaD family. It depends on Fe(2+) as a cofactor.

It localises to the cytoplasm. It catalyses the reaction L-threonylcarbamoyladenylate + adenosine(37) in tRNA = N(6)-L-threonylcarbamoyladenosine(37) in tRNA + AMP + H(+). Functionally, required for the formation of a threonylcarbamoyl group on adenosine at position 37 (t(6)A37) in tRNAs that read codons beginning with adenine. Is involved in the transfer of the threonylcarbamoyl moiety of threonylcarbamoyl-AMP (TC-AMP) to the N6 group of A37, together with TsaE and TsaB. TsaD likely plays a direct catalytic role in this reaction. The protein is tRNA N6-adenosine threonylcarbamoyltransferase of Pelodictyon phaeoclathratiforme (strain DSM 5477 / BU-1).